We begin with the raw amino-acid sequence, 103 residues long: Small ribosomal subunit protein uS10 (103 aa).

Belongs to the universal ribosomal protein uS10 family. In terms of assembly, part of the 30S ribosomal subunit.

Functionally, involved in the binding of tRNA to the ribosomes. In Clostridioides difficile (strain 630) (Peptoclostridium difficile), this protein is Small ribosomal subunit protein uS10.